Reading from the N-terminus, the 266-residue chain is Small ribosomal subunit protein uS2 (266 aa).

It belongs to the universal ribosomal protein uS2 family.

This Paramagnetospirillum magneticum (strain ATCC 700264 / AMB-1) (Magnetospirillum magneticum) protein is Small ribosomal subunit protein uS2.